We begin with the raw amino-acid sequence, 159 residues long: V-type proton ATPase 16 kDa proteolipid subunit c (159 aa).

Residues 1-12 (MSSEVSSDNPIY) lie on the Lumenal side of the membrane. A helical transmembrane segment spans residues 13–35 (GPFFGVMGAASAIIFSALGAAYG). At 36–57 (TAKSGTGIAAMSVMRPELIMKS) the chain is on the cytoplasmic side. The chain crosses the membrane as a helical span at residues 58-78 (IIPVVMAGIIAIYGLVVAVLI). At 79 to 96 (AGALEEPSKYSLYRGFIH) the chain is on the lumenal side. Residues 97–118 (LGAGLAVGFSGLAAGFAIGIVG) form a helical membrane-spanning segment. The Cytoplasmic segment spans residues 119-130 (DAGVRGTAQQPR). The helical transmembrane segment at 131–156 (LFVGMILILIFAEVLGLYGLIVAIYL) threads the bilayer. The Lumenal portion of the chain corresponds to 157 to 159 (YTK).

Belongs to the V-ATPase proteolipid subunit family. In terms of assembly, V-ATPase is a heteromultimeric enzyme made up of two complexes: the ATP-hydrolytic V1 complex and the proton translocation V0 complex. The V1 complex consists of three catalytic AB heterodimers that form a heterohexamer, three peripheral stalks each consisting of EG heterodimers, one central rotor including subunits D and F, and the regulatory subunits C and H. The proton translocation complex V0 consists of the proton transport subunit a, a ring of proteolipid subunits c9c'', rotary subunit d, subunits e and f, and the accessory subunits VhaAC45 and ATP6AP2. As to expression, expressed in the larval middle mid-gut; predominantly in the copper cell region with lower levels of expression in the interstitial cells.

It is found in the membrane. In terms of biological role, proton-conducting pore forming subunit of the V0 complex of vacuolar(H+)-ATPase (V-ATPase), a multisubunit enzyme composed of a peripheral complex (V1) that hydrolyzes ATP and a membrane integral complex (V0) that translocates protons. V-ATPase is responsible for acidifying and maintaining the pH of intracellular compartments and in some cell types, is targeted to the plasma membrane, where it is responsible for acidifying the extracellular environment. In enterocytes, acts as part of a pHCl-2 sensory pathway which mediates Tor-dependent larval growth and metabolism in response to zinc availability. Likely acts in maintaining enterocyte lysosomal acidification which consequently promotes Tor activation at the lysosome membrane. This Drosophila melanogaster (Fruit fly) protein is V-type proton ATPase 16 kDa proteolipid subunit c (Vha16-1).